Reading from the N-terminus, the 141-residue chain is Nucleoside triphosphatase NudI (141 aa).

The region spanning 1-141 (MRQRTIVCPL…RKTLRLKGLL (141 aa)) is the Nudix hydrolase domain. The Nudix box signature appears at 38 to 59 (GGVEPGERIEEALRREIREELG).

It belongs to the Nudix hydrolase family. NudI subfamily. In terms of assembly, monomer. Mg(2+) is required as a cofactor.

The catalysed reaction is a ribonucleoside 5'-triphosphate + H2O = a ribonucleoside 5'-phosphate + diphosphate + H(+). It catalyses the reaction a 2'-deoxyribonucleoside 5'-triphosphate + H2O = a 2'-deoxyribonucleoside 5'-phosphate + diphosphate + H(+). It carries out the reaction dUTP + H2O = dUMP + diphosphate + H(+). The enzyme catalyses dTTP + H2O = dTMP + diphosphate + H(+). The catalysed reaction is dCTP + H2O = dCMP + diphosphate + H(+). Catalyzes the hydrolysis of nucleoside triphosphates, with a preference for pyrimidine deoxynucleoside triphosphates (dUTP, dTTP and dCTP). This chain is Nucleoside triphosphatase NudI, found in Escherichia coli O9:H4 (strain HS).